The following is a 188-amino-acid chain: UPF0301 protein Cag_1601 (188 aa).

It belongs to the UPF0301 (AlgH) family.

This chain is UPF0301 protein Cag_1601, found in Chlorobium chlorochromatii (strain CaD3).